Here is a 190-residue protein sequence, read N- to C-terminus: 3-isopropylmalate dehydratase small subunit (190 aa).

Belongs to the LeuD family. LeuD type 1 subfamily. As to quaternary structure, heterodimer of LeuC and LeuD.

The catalysed reaction is (2R,3S)-3-isopropylmalate = (2S)-2-isopropylmalate. It participates in amino-acid biosynthesis; L-leucine biosynthesis; L-leucine from 3-methyl-2-oxobutanoate: step 2/4. Its function is as follows. Catalyzes the isomerization between 2-isopropylmalate and 3-isopropylmalate, via the formation of 2-isopropylmaleate. This chain is 3-isopropylmalate dehydratase small subunit, found in Staphylococcus aureus (strain MSSA476).